We begin with the raw amino-acid sequence, 190 residues long: MHSSNNFFKDNIFRSLSKEDPDYSRNIEGQVIRLHWDWAQLLMLSAKRMKVAFKLDIEKDQRVWDRCTADDLKGRNGFKRCLQFTLYRPRDLLSLLNEAFFSAFRENRETIINTDLEYAAKSISMARLEDLWKEYQKIFPSIQVITSAFRSIEPELTVYTCLKKIEASFELIEENGDPKITSEIQLLKAS.

The chain is Allergen Alt a 2 (ALTA2) from Alternaria alternata (Alternaria rot fungus).